Consider the following 61-residue polypeptide: Chi-conotoxin MrIA (61 aa).

An N-terminal signal peptide occupies residues 1–19 (MRCLPVLIILLLLTASAPG). A propeptide spanning residues 20–48 (VVVLPKTEDDVPMSSVYGNGKSILRGILR) is cleaved from the precursor. 2 cysteine pairs are disulfide-bonded: C52/C61 and C53/C58. 4-hydroxyproline is present on P60.

The protein belongs to the conotoxin T superfamily. As to expression, expressed by the venom duct.

It localises to the secreted. Its function is as follows. Chi-conotoxins inhibit the neuronal noradrenaline transporter (NET/SLC6A2). Activity has been described on both human (inhibition of norepinephrine uptake is IC(50)=1.26 uM) and rat (pIC(50)=6.21 corresponding IC(50)=0.16 uM) transporters. Acts as a reversible non-competitive inhibitor. The chain is Chi-conotoxin MrIA from Conus marmoreus (Marble cone).